We begin with the raw amino-acid sequence, 757 residues long: Protein hunchback (757 aa).

Disordered stretches follow at residues 30-51 and 171-213; these read EPGHHLDGNSVASSPRQSPIPS and EKLQ…EDMK. Residues 39–51 show a composition bias toward polar residues; sequence SVASSPRQSPIPS. The segment covering 197-213 has biased composition (basic and acidic residues); that stretch reads EPEKEHDQMSNSSEDMK. 4 C2H2-type zinc fingers span residues 239-261, 268-290, 296-318, and 324-348; these read YKCKTCGVVAITKVDFWAHTRTH, LQCPKCPFVTEFKHHLEYHIRKH, FQCDKCSYTCVNKSMLNSHRKSH, and YRCADCDYATKYCHSFKLHLRKYGH. Disordered regions lie at residues 367 to 416, 511 to 535, and 602 to 694; these read DVYG…VATS, EQLQQQNQQQSDNEEEDQDDEYERK, and MTSP…APPS. Low complexity-rich tracts occupy residues 397–414 and 512–521; these read VAAVAPQQQQSQPAQPVA and QLQQQNQQQS. Residues 522–531 are compositionally biased toward acidic residues; it reads DNEEEDQDDE. Residues 651-694 show a composition bias toward low complexity; sequence ANTSASSTASSSGNSSNASSNSNGNSSSNSSSNGTTSAVAAPPS. C2H2-type zinc fingers lie at residues 704–726 and 732–756; these read YECKYCDIFFKDAVLYTIHMGYH and FKCNMCGEKCDGPVGLFVHMARNAH.

This sequence belongs to the hunchback C2H2-type zinc-finger protein family.

Its subcellular location is the nucleus. In terms of biological role, gap class segmentation protein that controls development of head structures. This Drosophila sechellia (Fruit fly) protein is Protein hunchback (hb).